A 179-amino-acid polypeptide reads, in one-letter code: MTLDATLAADIDAVCRLTGQFTLRSGQQATEYFDKYLFEADPQLLLRVAREMVGLLPDGTDLLGGLELGGVPIATMVSSLTGRPALYVRKKAKEYGTCKLAEGPDVAGRRVTLIEDVITTGGAVRDATRALRAAGAEVDVVVCAIDRSPAGEHPLADVGLEVRPVLTKAELDAAREAGA.

5-phospho-alpha-D-ribose 1-diphosphate contacts are provided by residues arginine 24, arginine 89, lysine 90, lysine 93, and glutamate 115 to alanine 123. Threonine 119 and arginine 147 together coordinate orotate.

It belongs to the purine/pyrimidine phosphoribosyltransferase family. PyrE subfamily. In terms of assembly, homodimer. Requires Mg(2+) as cofactor.

It catalyses the reaction orotidine 5'-phosphate + diphosphate = orotate + 5-phospho-alpha-D-ribose 1-diphosphate. Its pathway is pyrimidine metabolism; UMP biosynthesis via de novo pathway; UMP from orotate: step 1/2. Catalyzes the transfer of a ribosyl phosphate group from 5-phosphoribose 1-diphosphate to orotate, leading to the formation of orotidine monophosphate (OMP). The protein is Orotate phosphoribosyltransferase of Nocardioides sp. (strain ATCC BAA-499 / JS614).